Here is a 197-residue protein sequence, read N- to C-terminus: NADH-quinone oxidoreductase subunit I 2 (197 aa).

4Fe-4S ferredoxin-type domains are found at residues 42–71 (GVIGLFEENCTVCMLCARECPDWCIYIDSH) and 91–120 (DRFAIDFALCMYCGICIEVCPFDALFWSPE). Positions 51, 54, 57, 61, 100, 103, 106, and 110 each coordinate [4Fe-4S] cluster. The tract at residues 147–197 (APPALDPGAEEPKELAAARKAADKLAAQQQPDQPGPDHPGQPDESGQEGRT) is disordered. Basic and acidic residues predominate over residues 156-169 (EEPKELAAARKAAD).

This sequence belongs to the complex I 23 kDa subunit family. In terms of assembly, NDH-1 is composed of 14 different subunits. Subunits NuoA, H, J, K, L, M, N constitute the membrane sector of the complex. [4Fe-4S] cluster is required as a cofactor.

The protein resides in the cell membrane. It catalyses the reaction a quinone + NADH + 5 H(+)(in) = a quinol + NAD(+) + 4 H(+)(out). NDH-1 shuttles electrons from NADH, via FMN and iron-sulfur (Fe-S) centers, to quinones in the respiratory chain. The immediate electron acceptor for the enzyme in this species is believed to be ubiquinone. Couples the redox reaction to proton translocation (for every two electrons transferred, four hydrogen ions are translocated across the cytoplasmic membrane), and thus conserves the redox energy in a proton gradient. The chain is NADH-quinone oxidoreductase subunit I 2 from Streptomyces coelicolor (strain ATCC BAA-471 / A3(2) / M145).